Reading from the N-terminus, the 136-residue chain is NADPH-dependent 7-cyano-7-deazaguanine reductase (136 aa).

Cys-53 serves as the catalytic Thioimide intermediate. Asp-60 acts as the Proton donor in catalysis. Substrate-binding positions include Val-75–Leu-77 and His-94–Glu-95.

This sequence belongs to the GTP cyclohydrolase I family. QueF type 1 subfamily.

The protein localises to the cytoplasm. It catalyses the reaction 7-aminomethyl-7-carbaguanine + 2 NADP(+) = 7-cyano-7-deazaguanine + 2 NADPH + 3 H(+). It functions in the pathway tRNA modification; tRNA-queuosine biosynthesis. Functionally, catalyzes the NADPH-dependent reduction of 7-cyano-7-deazaguanine (preQ0) to 7-aminomethyl-7-deazaguanine (preQ1). The polypeptide is NADPH-dependent 7-cyano-7-deazaguanine reductase (Nostoc sp. (strain PCC 7120 / SAG 25.82 / UTEX 2576)).